Here is a 144-residue protein sequence, read N- to C-terminus: FK506-binding protein 2 (144 aa).

The first 20 residues, 1–20 (MARIIVLIVAFMALIAGVFA), serve as a signal peptide directing secretion. The PPIase FKBP-type domain occupies 48–136 (GDTVSVHYTG…IFTTELVSID (89 aa)). Positions 141–144 (RDEL) match the Prevents secretion from ER motif.

The protein belongs to the FKBP-type PPIase family. FKBP2 subfamily.

The protein resides in the endoplasmic reticulum. It carries out the reaction [protein]-peptidylproline (omega=180) = [protein]-peptidylproline (omega=0). Its activity is regulated as follows. Inhibited by both FK506 and rapamycin. In terms of biological role, PPIases accelerate the folding of proteins. It catalyzes the cis-trans isomerization of proline imidic peptide bonds in oligopeptides. This chain is FK506-binding protein 2 (FPR2), found in Yarrowia lipolytica (strain CLIB 122 / E 150) (Yeast).